The sequence spans 1127 residues: E3 ubiquitin-protein ligase TRIM33 (1127 aa).

The segment covering Met1 to Gly18 has biased composition (gly residues). The tract at residues Met1–Pro118 is disordered. Positions Met1 to His147 are necessary for E3 ubiquitin-protein ligase activity and repression of SMAD4 signaling and transcriptional repression. Residues Ser19–Pro37 show a composition bias toward low complexity. The span at Arg52 to Asp64 shows a compositional bias: gly residues. Low complexity predominate over residues Gly65–Pro97. The segment covering Ala98–Pro118 has biased composition (pro residues). An RING-type zinc finger spans residues Cys125–Leu154. 2 B box-type zinc fingers span residues Lys212–Lys259 and Gln271–Leu312. Positions 217, 220, 241, 245, 276, 279, 299, and 304 each coordinate Zn(2+). The necessary for oligomerization stretch occupies residues Cys299–Asp401. Residues Cys299–Asp401 adopt a coiled-coil conformation. Glycyl lysine isopeptide (Lys-Gly) (interchain with G-Cter in SUMO2) cross-links involve residues Lys329, Lys334, Lys481, and Lys504. Arg515 carries the post-translational modification Asymmetric dimethylarginine; alternate. Position 515 is an omega-N-methylarginine; alternate (Arg515). Lys527 is covalently cross-linked (Glycyl lysine isopeptide (Lys-Gly) (interchain with G-Cter in SUMO2)). Arg535 carries the omega-N-methylarginine modification. The disordered stretch occupies residues Met536–Gln563. The residue at position 577 (Arg577) is an Asymmetric dimethylarginine. Arg591 carries the asymmetric dimethylarginine; alternate modification. Residue Arg591 is modified to Omega-N-methylarginine; alternate. Residues Arg598 and Arg604 each carry the asymmetric dimethylarginine modification. 3 disordered regions span residues Pro608–Pro629, Asn673–Gly692, and Tyr703–Leu818. Residues Pro723–Arg759 are compositionally biased toward low complexity. Residues Lys763 and Lys769 each carry the N6-acetyllysine; alternate modification. Glycyl lysine isopeptide (Lys-Gly) (interchain with G-Cter in SUMO2); alternate cross-links involve residues Lys763 and Lys769. Residue Lys774 forms a Glycyl lysine isopeptide (Lys-Gly) (interchain with G-Cter in SUMO2) linkage. Glycyl lysine isopeptide (Lys-Gly) (interchain with G-Cter in SUMO2); alternate cross-links involve residues Lys776 and Lys793. Glycyl lysine isopeptide (Lys-Gly) (interchain with G-Cter in SUMO1); alternate cross-links involve residues Lys776 and Lys793. Lys793 is modified (N6-acetyllysine; alternate). Over residues Lys793 to Arg802 the composition is skewed to basic and acidic residues. Lys796 is covalently cross-linked (Glycyl lysine isopeptide (Lys-Gly) (interchain with G-Cter in SUMO2)). Ser803 is subject to Phosphoserine. Positions Leu807 to Leu818 are enriched in low complexity. Thr815 is subject to Phosphothreonine. Residue Lys861 forms a Glycyl lysine isopeptide (Lys-Gly) (interchain with G-Cter in SUMO2) linkage. At Ser862 the chain carries Phosphoserine. The segment at Glu887 to Ile934 adopts a PHD-type zinc-finger fold. The residue at position 951 (Lys951) is an N6-acetyllysine. Position 953 is an N6-acetyllysine; alternate (Lys953). Lys953 participates in a covalent cross-link: Glycyl lysine isopeptide (Lys-Gly) (interchain with G-Cter in SUMO2); alternate. The region spanning Gly957–Ile1080 is the Bromo domain. Glycyl lysine isopeptide (Lys-Gly) (interchain with G-Cter in SUMO2) cross-links involve residues Lys1007 and Lys1043. At Thr1051 the chain carries Phosphothreonine. Lys1057 participates in a covalent cross-link: Glycyl lysine isopeptide (Lys-Gly) (interchain with G-Cter in SUMO2). The tract at residues Pro1088 to Lys1127 is disordered. Residues Phe1092–Phe1109 are compositionally biased toward acidic residues. Thr1102 bears the Phosphothreonine mark. A Phosphoserine modification is found at Ser1105. Lys1118 participates in a covalent cross-link: Glycyl lysine isopeptide (Lys-Gly) (interchain with G-Cter in SUMO2). Positions Lys1118–Lys1127 are enriched in basic and acidic residues. Ser1119 is subject to Phosphoserine.

Belongs to the TRIM/RBCC family. In terms of assembly, homooligomer and heterooligomer with TRIM24 and TRIM28 family members. Interacts with SMAD4 in unstimulated cells. Found in a complex with SMAD2 and SMAD3 upon addition of TGF-beta. Interacts with SMAD2 and SMAD3. Interacts with SMAD4 under basal and induced conditions and, upon TGF-beta signaling, with activated SMAD2. Forms a ternary complex with SMAD4 and SMAD2 upon TGF-beta signaling. Sumoylated with SUMO1. Expressed in stem cells at the bottom of the crypts of the colon (at protein level). Expressed in colon adenomas and adenocarcinomas (at protein level). Expressed in brain, lung, liver, spleen, thymus, prostate, kidney, testis, heart, placenta, pancreas, small intestine, ovary, colon, skeletal muscle and hematopoietic progenitors.

It is found in the nucleus. It carries out the reaction S-ubiquitinyl-[E2 ubiquitin-conjugating enzyme]-L-cysteine + [acceptor protein]-L-lysine = [E2 ubiquitin-conjugating enzyme]-L-cysteine + N(6)-ubiquitinyl-[acceptor protein]-L-lysine.. Its pathway is protein modification; protein ubiquitination. Functionally, acts as an E3 ubiquitin-protein ligase. Promotes SMAD4 ubiquitination, nuclear exclusion and degradation via the ubiquitin proteasome pathway. According to PubMed:16751102, does not promote a decrease in the level of endogenous SMAD4. May act as a transcriptional repressor. Inhibits the transcriptional response to TGF-beta/BMP signaling cascade. Plays a role in the control of cell proliferation. Its association with SMAD2 and SMAD3 stimulates erythroid differentiation of hematopoietic stem/progenitor. Monoubiquitinates SMAD4 and acts as an inhibitor of SMAD4-dependent TGF-beta/BMP signaling cascade (Monoubiquitination of SMAD4 hampers its ability to form a stable complex with activated SMAD2/3 resulting in inhibition of TGF-beta/BMP signaling cascade). This Homo sapiens (Human) protein is E3 ubiquitin-protein ligase TRIM33 (TRIM33).